Consider the following 506-residue polypeptide: Tyrosine-protein kinase isoform SRK4 (506 aa).

2 stretches are compositionally biased toward polar residues: residues 1-10 (MGSCCSSQDG) and 18-31 (AGST…SQSV). A disordered region spans residues 1–53 (MGSCCSSQDGDGNGKATAGSTVDSHELSQSVKGKIKQPEPKPKPPPQVPPAQD). One can recognise an SH3 domain in the interval 54–116 (VKYPIYVGKY…PSNYVAEYKS (63 aa)). The SH2 domain maps to 122-214 (WFFGQVKRVD…GLCVNLKGPC (93 aa)). Positions 240-493 (IKLLRGLGAG…TLSWQLEEFF (254 aa)) constitute a Protein kinase domain. ATP is bound by residues 246–254 (LGAGQFGEV) and Lys268. Asp359 functions as the Proton acceptor in the catalytic mechanism.

The protein belongs to the protein kinase superfamily. Tyr protein kinase family.

It is found in the cytoplasm. It catalyses the reaction L-tyrosyl-[protein] + ATP = O-phospho-L-tyrosyl-[protein] + ADP + H(+). In Spongilla lacustris (Freshwater sponge), this protein is Tyrosine-protein kinase isoform SRK4 (SRK1).